Reading from the N-terminus, the 189-residue chain is Interferon alpha-F (189 aa).

A signal peptide spans 1–23 (MAPAWSLLLALLLLSCNAICSLG). 2 disulfide bridges follow: cysteine 24-cysteine 122 and cysteine 52-cysteine 162.

The protein belongs to the alpha/beta interferon family.

The protein localises to the secreted. Its function is as follows. Produced by macrophages, IFN-alpha have antiviral activities. Interferon stimulates the production of two enzymes: a protein kinase and an oligoadenylate synthetase. This Bos taurus (Bovine) protein is Interferon alpha-F (IFNAF).